A 303-amino-acid polypeptide reads, in one-letter code: Cysteine synthase B (303 aa).

K41 carries the post-translational modification N6-(pyridoxal phosphate)lysine. Pyridoxal 5'-phosphate is bound by residues N71, 174–178 (GTTGT), and S255.

Belongs to the cysteine synthase/cystathionine beta-synthase family. Requires pyridoxal 5'-phosphate as cofactor.

It catalyses the reaction O-acetyl-L-serine + hydrogen sulfide = L-cysteine + acetate. It functions in the pathway amino-acid biosynthesis; L-cysteine biosynthesis; L-cysteine from L-serine: step 2/2. Functionally, two cysteine synthase enzymes are found. Both catalyze the same reaction. Cysteine synthase B can also use thiosulfate in place of sulfide to give cysteine thiosulfonate as a product. The polypeptide is Cysteine synthase B (cysM) (Salmonella typhimurium (strain LT2 / SGSC1412 / ATCC 700720)).